The chain runs to 414 residues: Protein IQ-DOMAIN 8 (414 aa).

The Nuclear localization signal 1 motif lies at 14–21 (NKKNITDD). The tract at residues 40-61 (LISSSKGFKSRGGSYGTPSLGS) is disordered. IQ domains lie at 92-120 (REWA…AVVR), 121-143 (IQAI…CMQA), and 144-169 (LVRV…EKPS). The segment at 119-132 (VRIQAIFRGRQVRK) is calmodulin-binding. 3 disordered regions span residues 156–190 (NRGP…SPGS), 218–244 (HQPR…SCKS), and 262–329 (GRLM…SGSF). The span at 164 to 184 (ELEKPSDQQKDDPAKQAEKGW) shows a compositional bias: basic and acidic residues. The segment covering 231-244 (KQGSVKKNNGSCKS) has biased composition (polar residues). The span at 274–289 (NARKSESSVSEHDTVQ) shows a compositional bias: basic and acidic residues. The span at 307-328 (SSSATSSESSSTSQSPVPFSGS) shows a compositional bias: low complexity. Positions 336–343 (YRKPSYMS) match the Nuclear localization signal 2 motif. Residues 347–398 (SIKAKQRRSGSSSSCSKTPFEKKQSMSYNGDVNVRRSAGSDPLNNQWTDLYP) are disordered.

The protein belongs to the IQD family. In terms of assembly, binds to multiple calmodulin (CaM) in the presence of Ca(2+) and CaM-like proteins.

Its subcellular location is the nucleus. The protein resides in the cytoplasm. The protein localises to the cytoskeleton. It is found in the nucleus envelope. Functionally, may be involved in cooperative interactions with calmodulins or calmodulin-like proteins. Recruits calmodulin proteins to microtubules, thus being a potential scaffold in cellular signaling and trafficking. May associate with nucleic acids and regulate gene expression at the transcriptional or post-transcriptional level. The sequence is that of Protein IQ-DOMAIN 8 from Arabidopsis thaliana (Mouse-ear cress).